The sequence spans 354 residues: Uroporphyrinogen decarboxylase (354 aa).

Residues 27-31 (RQAGR), Asp-77, Tyr-154, Ser-209, and His-327 contribute to the substrate site.

This sequence belongs to the uroporphyrinogen decarboxylase family. As to quaternary structure, homodimer.

Its subcellular location is the cytoplasm. The enzyme catalyses uroporphyrinogen III + 4 H(+) = coproporphyrinogen III + 4 CO2. Its pathway is porphyrin-containing compound metabolism; protoporphyrin-IX biosynthesis; coproporphyrinogen-III from 5-aminolevulinate: step 4/4. Functionally, catalyzes the decarboxylation of four acetate groups of uroporphyrinogen-III to yield coproporphyrinogen-III. The sequence is that of Uroporphyrinogen decarboxylase from Shewanella denitrificans (strain OS217 / ATCC BAA-1090 / DSM 15013).